The sequence spans 253 residues: 3-deoxy-manno-octulosonate cytidylyltransferase (253 aa).

This sequence belongs to the KdsB family.

It localises to the cytoplasm. The enzyme catalyses 3-deoxy-alpha-D-manno-oct-2-ulosonate + CTP = CMP-3-deoxy-beta-D-manno-octulosonate + diphosphate. The protein operates within nucleotide-sugar biosynthesis; CMP-3-deoxy-D-manno-octulosonate biosynthesis; CMP-3-deoxy-D-manno-octulosonate from 3-deoxy-D-manno-octulosonate and CTP: step 1/1. It functions in the pathway bacterial outer membrane biogenesis; lipopolysaccharide biosynthesis. Activates KDO (a required 8-carbon sugar) for incorporation into bacterial lipopolysaccharide in Gram-negative bacteria. This chain is 3-deoxy-manno-octulosonate cytidylyltransferase, found in Idiomarina loihiensis (strain ATCC BAA-735 / DSM 15497 / L2-TR).